The primary structure comprises 159 residues: NADH-quinone oxidoreductase subunit I (159 aa).

2 consecutive 4Fe-4S ferredoxin-type domains span residues 50-80 (QRRY…IESE) and 90-119 (KRYD…ETHI). Residues cysteine 60, cysteine 63, cysteine 66, cysteine 70, cysteine 99, cysteine 102, cysteine 105, and cysteine 109 each coordinate [4Fe-4S] cluster.

It belongs to the complex I 23 kDa subunit family. NDH-1 is composed of 14 different subunits. Subunits NuoA, H, J, K, L, M, N constitute the membrane sector of the complex. It depends on [4Fe-4S] cluster as a cofactor.

It is found in the cell inner membrane. The enzyme catalyses a quinone + NADH + 5 H(+)(in) = a quinol + NAD(+) + 4 H(+)(out). Functionally, NDH-1 shuttles electrons from NADH, via FMN and iron-sulfur (Fe-S) centers, to quinones in the respiratory chain. The immediate electron acceptor for the enzyme in this species is believed to be ubiquinone. Couples the redox reaction to proton translocation (for every two electrons transferred, four hydrogen ions are translocated across the cytoplasmic membrane), and thus conserves the redox energy in a proton gradient. This Neisseria meningitidis serogroup A / serotype 4A (strain DSM 15465 / Z2491) protein is NADH-quinone oxidoreductase subunit I.